The chain runs to 325 residues: Thiamine-monophosphate kinase (325 aa).

Residues aspartate 30, serine 45, threonine 46, and aspartate 47 each coordinate Mg(2+). Histidine 54 contacts substrate. Residues aspartate 75 and aspartate 122 each coordinate Mg(2+). ATP contacts are provided by residues 121–122 (GD) and arginine 146. Aspartate 212 is a Mg(2+) binding site. Residue serine 214 participates in ATP binding. Aspartate 215 is a binding site for Mg(2+). Residues glutamate 263 and tyrosine 319 each contribute to the substrate site.

Belongs to the thiamine-monophosphate kinase family.

The catalysed reaction is thiamine phosphate + ATP = thiamine diphosphate + ADP. It participates in cofactor biosynthesis; thiamine diphosphate biosynthesis; thiamine diphosphate from thiamine phosphate: step 1/1. Is markedly activated by the monovalent cations K(+), NH(4)(+), and Rb(+). Is significantly inhibited by ADP, AMP, p-chloromercuribenzoate, N-ethylmaleimide, pyrophosphate, and EDTA. Functionally, catalyzes the ATP-dependent phosphorylation of thiamine-monophosphate (TMP) to form thiamine-pyrophosphate (TPP), the active form of vitamin B1. Cannot use thiamine as substrate. Is highly specific for ATP as phosphate donor. This chain is Thiamine-monophosphate kinase (thiL), found in Escherichia coli (strain K12).